The following is a 244-amino-acid chain: Ubiquinone/menaquinone biosynthesis C-methyltransferase UbiE (244 aa).

S-adenosyl-L-methionine-binding positions include Thr70, Asp91, and 117–118; that span reads DA.

It belongs to the class I-like SAM-binding methyltransferase superfamily. MenG/UbiE family.

It carries out the reaction a 2-demethylmenaquinol + S-adenosyl-L-methionine = a menaquinol + S-adenosyl-L-homocysteine + H(+). The enzyme catalyses a 2-methoxy-6-(all-trans-polyprenyl)benzene-1,4-diol + S-adenosyl-L-methionine = a 5-methoxy-2-methyl-3-(all-trans-polyprenyl)benzene-1,4-diol + S-adenosyl-L-homocysteine + H(+). Its pathway is quinol/quinone metabolism; menaquinone biosynthesis; menaquinol from 1,4-dihydroxy-2-naphthoate: step 2/2. The protein operates within cofactor biosynthesis; ubiquinone biosynthesis. Its function is as follows. Methyltransferase required for the conversion of demethylmenaquinol (DMKH2) to menaquinol (MKH2) and the conversion of 2-polyprenyl-6-methoxy-1,4-benzoquinol (DDMQH2) to 2-polyprenyl-3-methyl-6-methoxy-1,4-benzoquinol (DMQH2). The protein is Ubiquinone/menaquinone biosynthesis C-methyltransferase UbiE of Chromobacterium violaceum (strain ATCC 12472 / DSM 30191 / JCM 1249 / CCUG 213 / NBRC 12614 / NCIMB 9131 / NCTC 9757 / MK).